Here is a 580-residue protein sequence, read N- to C-terminus: Glutathione hydrolase proenzyme (580 aa).

The signal sequence occupies residues 1–25; it reads MIKPTFLRRVAIAALLSGSCFSAAA. Position 114 (Arg114) interacts with L-glutamate. The active-site Nucleophile is Thr391. Residues Thr409, Asn411, Gln430, Asp433, 462 to 463, and 483 to 484 contribute to the L-glutamate site; these read SS and GG. Positions 561 to 580 are disordered; it reads DGELYGASDPRSVDDLTAGY.

This sequence belongs to the gamma-glutamyltransferase family. In terms of assembly, this enzyme consists of two polypeptide chains, which are synthesized in precursor form from a single polypeptide. Post-translationally, cleaved by autocatalysis into a large and a small subunit.

Its subcellular location is the periplasm. It catalyses the reaction an N-terminal (5-L-glutamyl)-[peptide] + an alpha-amino acid = 5-L-glutamyl amino acid + an N-terminal L-alpha-aminoacyl-[peptide]. The catalysed reaction is glutathione + H2O = L-cysteinylglycine + L-glutamate. The enzyme catalyses an S-substituted glutathione + H2O = an S-substituted L-cysteinylglycine + L-glutamate. The protein operates within sulfur metabolism; glutathione metabolism. Its activity is regulated as follows. Transferase and hydrolase activities are inhibited by L-Ala and L-Gln, and also by GGT affinity labeling reagents such as azaserine and 6-diazo-5-oxo-nor-leucine. Functionally, cleaves the gamma-glutamyl bond of periplasmic glutathione (gamma-Glu-Cys-Gly), glutathione conjugates, and other gamma-glutamyl compounds. The metabolism of glutathione releases free glutamate and the dipeptide cysteinyl-glycine, which is hydrolyzed to cysteine and glycine by dipeptidases; it may function in amino acid uptake/salvage, or possibly in peptidoglycan linkage. Catalyzes the hydrolysis and transpeptidation of many gamma-glutamyl compounds (including some D-gamma-glutamyl substrates), with a preference for basic and aromatic amino acids as acceptors. The KM values for gamma-glutamyl acceptors are so high that it has been proposed transpeptidation is not the physiological role in E.coli. This chain is Glutathione hydrolase proenzyme (ggt), found in Escherichia coli (strain K12).